The sequence spans 831 residues: Phenylalanine--tRNA ligase beta subunit (831 aa).

In terms of domain architecture, tRNA-binding spans 44–155; it reads GPVDGPVTVG…GAAEPGADGA (112 aa). The B5 domain maps to 414 to 489; sequence WSPPPIRMGV…RLEGLEVIPS (76 aa). Aspartate 467, aspartate 473, glutamate 476, and glutamate 477 together coordinate Mg(2+). An FDX-ACB domain is found at 737–830; sequence SPYPAVFQDV…AAERVGAVLR (94 aa).

This sequence belongs to the phenylalanyl-tRNA synthetase beta subunit family. Type 1 subfamily. As to quaternary structure, tetramer of two alpha and two beta subunits. Mg(2+) serves as cofactor.

The protein resides in the cytoplasm. It catalyses the reaction tRNA(Phe) + L-phenylalanine + ATP = L-phenylalanyl-tRNA(Phe) + AMP + diphosphate + H(+). This chain is Phenylalanine--tRNA ligase beta subunit, found in Mycobacterium bovis (strain ATCC BAA-935 / AF2122/97).